A 211-amino-acid chain; its full sequence is Uracil phosphoribosyltransferase (211 aa).

Residues arginine 81, arginine 106, and aspartate 133–serine 141 contribute to the 5-phospho-alpha-D-ribose 1-diphosphate site. Residues isoleucine 196 and glycine 201–alanine 203 each bind uracil. Aspartate 202 lines the 5-phospho-alpha-D-ribose 1-diphosphate pocket.

This sequence belongs to the UPRTase family. It depends on Mg(2+) as a cofactor.

It carries out the reaction UMP + diphosphate = 5-phospho-alpha-D-ribose 1-diphosphate + uracil. Its pathway is pyrimidine metabolism; UMP biosynthesis via salvage pathway; UMP from uracil: step 1/1. Its activity is regulated as follows. Allosterically activated by GTP. Functionally, catalyzes the conversion of uracil and 5-phospho-alpha-D-ribose 1-diphosphate (PRPP) to UMP and diphosphate. The sequence is that of Uracil phosphoribosyltransferase from Paracoccus denitrificans (strain Pd 1222).